The sequence spans 885 residues: MGGCVSVSLSCDREVNQFSQWLCVSGSYIQNLSENLASLQKAMGVLNAKRDDVQGRINREEFTGHRRRLAQVQVWLTRIQTIENQFNDLLSTCNAEIQRLCLCGFCSKNVKMSYLYGKRVIVLLREVEGLSSQGVFDIVTEAAPIAEVEELPIQSTIVGQDSMLDKVWNCLMEDKVWIVGLYGMGGVGKTTLLTQINNKFSKLGGGFDVVIWVVVSKNATVHKIQKSIGEKLGLVGKNWDEKNKNQRALDIHNVLRRKKFVLLLDDIWEKVELKVIGVPYPSGENGCKVAFTTHSKEVCGRMGVDNPMEISCLDTGNAWDLLKKKVGENTLGSHPDIPQLARKVSEKCCGLPLALNVIGETMSFKRTIQEWRHATEVLTSATDFSGMEDEILPILKYSYDSLNGEDAKSCFLYCSLFPEDFEIRKEMLIEYWICEGFIKEKQGREKAFNQGYDILGTLVRSSLLLEGAKDKDVVSMHDMVREMALWIFSDLGKHKERCIVQAGIGLDELPEVENWRAVKRMSLMNNNFEKILGSPECVELITLFLQNNYKLVDISMEFFRCMPSLAVLDLSENHSLSELPEEISELVSLQYLDLSGTYIERLPHGLHELRKLVHLKLERTRRLESISGISYLSSLRTLRLRDSKTTLDTGLMKELQLLEHLELITTDISSGLVGELFCYPRVGRCIQHIYIRDHWERPEESVGVLVLPAIHNLCYISIWNCWMWEIMIEKTPWKKNLTNPNFSNLSNVRIEGCDGLKDLTWLLFAPNLINLRVWGCKHLEDIISKEKAASVLEKEILPFQKLECLNLYQLSELKSIYWNALPFQRLRCLDILNNCPKLRKLPLDSKSVVKVEEFVIKYKEKKWIERVEWEDEATQYRFLPTCRLR.

A coiled-coil region spans residues Ser-27 to Glu-61. The NB-ARC domain occupies Glu-141–Gly-443. Gly-183–Thr-190 contacts ATP. LRR repeat units lie at residues Ala-517–Val-538, Glu-539–Cys-561, Ser-564–Leu-586, Ser-588–Arg-610, Lys-611–Ser-633, Ser-634–Leu-655, and Leu-657–Tyr-679.

It belongs to the disease resistance NB-LRR family.

Its function is as follows. Disease resistance (R) protein. The chain is Disease resistance protein RFL1 (RFL1) from Arabidopsis thaliana (Mouse-ear cress).